The following is a 150-amino-acid chain: Macrodomain Ter protein (150 aa).

It belongs to the MatP family. As to quaternary structure, homodimer.

It localises to the cytoplasm. Functionally, required for spatial organization of the terminus region of the chromosome (Ter macrodomain) during the cell cycle. Prevents early segregation of duplicated Ter macrodomains during cell division. Binds specifically to matS, which is a 13 bp signature motif repeated within the Ter macrodomain. The sequence is that of Macrodomain Ter protein from Shigella boydii serotype 18 (strain CDC 3083-94 / BS512).